The primary structure comprises 440 residues: Protein disulfide-isomerase A6 homolog (440 aa).

Residues 1-18 form the signal peptide; sequence MALIKLLLASLAITSVCG. Thioredoxin domains follow at residues 19 to 131 and 127 to 273; these read MYSK…AEAK and LAEA…ARAQ. Catalysis depends on nucleophile residues Cys-54 and Cys-57. Cysteines 54 and 57 form a disulfide. The segment at 138 to 164 is disordered; that stretch reads LGGKSSGSSSSGSGSGSGKRGGGGSGN. Over residues 139-149 the composition is skewed to low complexity; sequence GGKSSGSSSSG. The segment covering 150-163 has biased composition (gly residues); it reads SGSGSGKRGGGGSG. Residues Cys-194 and Cys-197 each act as nucleophile in the active site. Cys-194 and Cys-197 are oxidised to a cystine. The tract at residues 404-426 is disordered; that stretch reads DGFPKIQKTEKWDGKDGALPAED. Residues 410–419 are compositionally biased toward basic and acidic residues; that stretch reads QKTEKWDGKD. Positions 437 to 440 match the Prevents secretion from ER motif; it reads KTEL.

Belongs to the protein disulfide isomerase family.

The protein resides in the endoplasmic reticulum lumen. It catalyses the reaction Catalyzes the rearrangement of -S-S- bonds in proteins.. In terms of biological role, may function as a chaperone that inhibits aggregation of misfolded proteins. May negatively regulate the unfolded protein response (UPR) through binding to UPR sensors. The polypeptide is Protein disulfide-isomerase A6 homolog (Caenorhabditis elegans).